Reading from the N-terminus, the 142-residue chain is Protein spalt-accessory (142 aa).

Positions methionine 1–alanine 16 are cleaved as a signal peptide. The segment covering glycine 65–alanine 77 has biased composition (gly residues). The segment at glycine 65 to histidine 142 is disordered. Residues asparagine 112–histidine 124 are compositionally biased toward basic and acidic residues. Basic residues predominate over residues arginine 125–histidine 142.

It localises to the secreted. In terms of biological role, likely to be involved in the establishment of the head. The protein is Protein spalt-accessory (sala) of Drosophila orena (Fruit fly).